The following is a 270-amino-acid chain: 2-aminoethanethiol dioxygenase (270 aa).

The segment at 21–48 (FRGSGGGRGASDRDAASGPEAPMQPGFP) is disordered. Residues His-112 and His-114 each contribute to the Fe cation site. Positions 140-164 (GGQRPRALPPEQQFEPPLQPREREA) are disordered. His-193 is a Fe cation binding site. Residues 220–223 (CHYY) constitute a cross-link (3'-(S-cysteinyl)-tyrosine (Cys-Tyr)).

Monomer. Fe cation serves as cofactor.

The catalysed reaction is cysteamine + O2 = hypotaurine + H(+). The enzyme catalyses N-terminal L-cysteinyl-[protein] + O2 = N-terminal S-hydroxy-S-oxy-L-cysteinyl-[protein] + H(+). Its function is as follows. Plays a vital role in regulating thiol metabolism and preserving oxygen homeostasis by oxidizing the sulfur of cysteamine and N-terminal cysteine-containing proteins to their corresponding sulfinic acids using O2 as a cosubstrate. Catalyzes the oxidation of cysteamine (2-aminoethanethiol) to hypotaurine. Catalyzes the oxidation of regulators of G-protein signaling 4 (RGS4) and 5 (RGS5) and interleukin-32 (IL32). This is 2-aminoethanethiol dioxygenase (ADO) from Homo sapiens (Human).